The primary structure comprises 187 residues: Elongation factor P (187 aa).

This sequence belongs to the elongation factor P family.

It is found in the cytoplasm. Its pathway is protein biosynthesis; polypeptide chain elongation. In terms of biological role, involved in peptide bond synthesis. Stimulates efficient translation and peptide-bond synthesis on native or reconstituted 70S ribosomes in vitro. Probably functions indirectly by altering the affinity of the ribosome for aminoacyl-tRNA, thus increasing their reactivity as acceptors for peptidyl transferase. This chain is Elongation factor P, found in Helicobacter acinonychis (strain Sheeba).